The following is a 207-amino-acid chain: 8-oxoguanine DNA glycosylase/AP lyase (207 aa).

Residues Lys-129 and Asp-147 contribute to the active site.

This sequence belongs to the type-2 OGG1 family.

The enzyme catalyses 2'-deoxyribonucleotide-(2'-deoxyribose 5'-phosphate)-2'-deoxyribonucleotide-DNA = a 3'-end 2'-deoxyribonucleotide-(2,3-dehydro-2,3-deoxyribose 5'-phosphate)-DNA + a 5'-end 5'-phospho-2'-deoxyribonucleoside-DNA + H(+). Functionally, catalyzes the excision of an oxidatively damaged form of guanine (7,8-dihydro-8-oxoguanine = 8-oxoG) from DNA. Also cleaves the DNA backbone at apurinic/apyrimidinic sites (AP sites). This Thermotoga maritima (strain ATCC 43589 / DSM 3109 / JCM 10099 / NBRC 100826 / MSB8) protein is 8-oxoguanine DNA glycosylase/AP lyase.